A 224-amino-acid chain; its full sequence is MAEKTGLFISFEGGEGAGKSTQIRTLAEALRGRGFEVVVTREPGGSPGAEAVRHVILSGAAESFGVRMEAILFAAARNDHVEEVIRPALARGEIVLCDRFLDSSRVYQGTTGNLEPDFIETLQRIAIDGVVPELTLIFDIAAEKGLARARKRADEGATPDRFEKEEIETHEKRREAYLDIALAEPRRCRIVNADQPEDKVTEDVMSFVEPLLERAGNAADAAHE.

13–20 (GGEGAGKS) contributes to the ATP binding site.

This sequence belongs to the thymidylate kinase family.

It carries out the reaction dTMP + ATP = dTDP + ADP. Functionally, phosphorylation of dTMP to form dTDP in both de novo and salvage pathways of dTTP synthesis. This chain is Thymidylate kinase, found in Agrobacterium fabrum (strain C58 / ATCC 33970) (Agrobacterium tumefaciens (strain C58)).